Consider the following 167-residue polypeptide: uncharacterized protein (167 aa).

The protein to A.thaliana At2g20940.

This is an uncharacterized protein from Schizosaccharomyces pombe (strain 972 / ATCC 24843) (Fission yeast).